The sequence spans 72 residues: Sec-independent protein translocase protein TatA (72 aa).

A helical transmembrane segment spans residues 1-21; it reads MLGGISIWQLLIVLAILVLIF.

Belongs to the TatA/E family. As to quaternary structure, the Tat system comprises two distinct complexes: a TatABC complex, containing multiple copies of TatA, TatB and TatC subunits, and a separate TatA complex, containing only TatA subunits. Substrates initially bind to the TatABC complex, which probably triggers association of the separate TatA complex to form the active translocon.

It localises to the cell inner membrane. Part of the twin-arginine translocation (Tat) system that transports large folded proteins containing a characteristic twin-arginine motif in their signal peptide across membranes. TatA could form the protein-conducting channel of the Tat system. The protein is Sec-independent protein translocase protein TatA of Marinomonas sp. (strain MWYL1).